The chain runs to 293 residues: Shikimate dehydrogenase (NADP(+)) (293 aa).

Residues 20–22 (SLT) and Thr72 each bind shikimate. Lys76 (proton acceptor) is an active-site residue. Shikimate is bound by residues Asn97 and Asp112. Residues 136–140 (GAGGA) and Ile230 contribute to the NADP(+) site. Residue Tyr232 participates in shikimate binding. Gly253 is an NADP(+) binding site.

Belongs to the shikimate dehydrogenase family. As to quaternary structure, homodimer.

It carries out the reaction shikimate + NADP(+) = 3-dehydroshikimate + NADPH + H(+). Its pathway is metabolic intermediate biosynthesis; chorismate biosynthesis; chorismate from D-erythrose 4-phosphate and phosphoenolpyruvate: step 4/7. Its function is as follows. Involved in the biosynthesis of the chorismate, which leads to the biosynthesis of aromatic amino acids. Catalyzes the reversible NADPH linked reduction of 3-dehydroshikimate (DHSA) to yield shikimate (SA). The sequence is that of Shikimate dehydrogenase (NADP(+)) from Pseudarthrobacter chlorophenolicus (strain ATCC 700700 / DSM 12829 / CIP 107037 / JCM 12360 / KCTC 9906 / NCIMB 13794 / A6) (Arthrobacter chlorophenolicus).